A 337-amino-acid chain; its full sequence is Inositol 2-dehydrogenase 1 (337 aa).

This sequence belongs to the Gfo/Idh/MocA family. As to quaternary structure, homotetramer.

It catalyses the reaction myo-inositol + NAD(+) = scyllo-inosose + NADH + H(+). Its function is as follows. Involved in the oxidation of myo-inositol (MI) to 2-keto-myo-inositol (2KMI or 2-inosose). The protein is Inositol 2-dehydrogenase 1 of Paenarthrobacter aurescens (strain TC1).